A 364-amino-acid polypeptide reads, in one-letter code: Alanine racemase (364 aa).

Lys34 (proton acceptor; specific for D-alanine) is an active-site residue. Lys34 is modified (N6-(pyridoxal phosphate)lysine). Arg129 contributes to the substrate binding site. The active-site Proton acceptor; specific for L-alanine is the Tyr259. A substrate-binding site is contributed by Met307.

Belongs to the alanine racemase family. Pyridoxal 5'-phosphate is required as a cofactor.

The catalysed reaction is L-alanine = D-alanine. It functions in the pathway amino-acid biosynthesis; D-alanine biosynthesis; D-alanine from L-alanine: step 1/1. Its function is as follows. Catalyzes the interconversion of L-alanine and D-alanine. May also act on other amino acids. This is Alanine racemase (alr) from Coxiella burnetii (strain CbuK_Q154) (Coxiella burnetii (strain Q154)).